The sequence spans 375 residues: Fluoride export protein 2 (375 aa).

Residues 1 to 11 (MIFNPVISNHK) lie on the Cytoplasmic side of the membrane. The chain crosses the membrane as a helical span at residues 12 to 32 (LSHYIHVFCTFTTFCILGTET). Over 33–34 (RQ) the chain is Extracellular. Residues 35–55 (AITALSTYTPAFVTAPTVLWS) traverse the membrane as a helical segment. Residues 56 to 79 (NCSSCMLMGIMQSLNAYTWMKDHQ) lie on the Cytoplasmic side of the membrane. The helical transmembrane segment at 80–100 (VLFLGVTTGYCGALSSFSSML) threads the bilayer. Residues 101–127 (LEMFEHSTNLTNGNIANHTKLPNRAYG) lie on the Extracellular side of the membrane. Asparagine 109 and asparagine 117 each carry an N-linked (GlcNAc...) asparagine glycan. The helical transmembrane segment at 128 to 148 (IMEFLSVLLVHLMVSMGSLIF) threads the bilayer. The Cytoplasmic segment spans residues 149-213 (GRQLGKEVIV…FKKFFDVVDK (65 aa)). A helical transmembrane segment spans residues 214 to 234 (LAYALAFPLIILFVVLCAYYE). The N-linked (GlcNAc...) asparagine glycan is linked to asparagine 235. Residues 235-241 (NYSRGKW) are Extracellular-facing. Residues 242-262 (TLPCLFGIFAGFLRYWLAEMF) traverse the membrane as a helical segment. Over 263–268 (NKTNKK) the chain is Cytoplasmic. A helical transmembrane segment spans residues 269-289 (FPLGTFLANVFATLLIGIFTM). The Extracellular segment spans residues 290–310 (VQRGKKHFSTDIPIVNSLNSC). A helical membrane pass occupies residues 311–331 (HIVSALISGFCGTLSTISTFI). At 332-338 (NEGYKLS) the chain is on the cytoplasmic side. A helical transmembrane segment spans residues 339-359 (FINMLIYYTVSIGISYCLLVI). The Extracellular segment spans residues 360–375 (TLGSYAWTRGLTNPIC).

This sequence belongs to the fluoride channel Fluc/FEX (TC 1.A.43) family.

Its subcellular location is the cell membrane. The catalysed reaction is fluoride(in) = fluoride(out). Fluoride channel required for the rapid expulsion of cytoplasmic fluoride. This chain is Fluoride export protein 2, found in Saccharomyces cerevisiae (strain ATCC 204508 / S288c) (Baker's yeast).